The chain runs to 447 residues: Phosphoglucosamine mutase (447 aa).

Ser-103 serves as the catalytic Phosphoserine intermediate. Mg(2+) contacts are provided by Ser-103, Asp-242, Asp-244, and Asp-246. Phosphoserine is present on Ser-103.

Belongs to the phosphohexose mutase family. It depends on Mg(2+) as a cofactor. Post-translationally, activated by phosphorylation.

It catalyses the reaction alpha-D-glucosamine 1-phosphate = D-glucosamine 6-phosphate. Its function is as follows. Catalyzes the conversion of glucosamine-6-phosphate to glucosamine-1-phosphate. This Marinobacter nauticus (strain ATCC 700491 / DSM 11845 / VT8) (Marinobacter aquaeolei) protein is Phosphoglucosamine mutase.